The following is a 294-amino-acid chain: 4-hydroxybenzoate octaprenyltransferase (294 aa).

8 helical membrane-spanning segments follow: residues 24 to 44 (IGILLLMWPTLWALWLAADGF), 47 to 67 (LHLIVIFALGTVLMRSAGCVI), 99 to 119 (LLAAGLSLVSFVLILPLDPLV), 139 to 159 (FLAIPQAYLGIAFGFGIPMGF), 164 to 184 (GEVPAIAWLLLLANIFWAVAY), 213 to 233 (VAAVMLCYAVAFGLIAAVGIA), 238 to 258 (PWFFGGIAIAAAIAIYHYTLI), and 274 to 294 (NWVGAVLFVALVIDYVAFPAA).

The protein belongs to the UbiA prenyltransferase family. It depends on Mg(2+) as a cofactor.

It localises to the cell inner membrane. It carries out the reaction all-trans-octaprenyl diphosphate + 4-hydroxybenzoate = 4-hydroxy-3-(all-trans-octaprenyl)benzoate + diphosphate. Its pathway is cofactor biosynthesis; ubiquinone biosynthesis. Functionally, catalyzes the prenylation of para-hydroxybenzoate (PHB) with an all-trans polyprenyl group. Mediates the second step in the final reaction sequence of ubiquinone-8 (UQ-8) biosynthesis, which is the condensation of the polyisoprenoid side chain with PHB, generating the first membrane-bound Q intermediate 3-octaprenyl-4-hydroxybenzoate. The polypeptide is 4-hydroxybenzoate octaprenyltransferase (Aromatoleum aromaticum (strain DSM 19018 / LMG 30748 / EbN1) (Azoarcus sp. (strain EbN1))).